The sequence spans 290 residues: Phosphatidylglycerol--prolipoprotein diacylglyceryl transferase (290 aa).

The next 7 membrane-spanning stretches (helical) occupy residues 21-41 (VSLH…MWLA), 60-80 (LLYA…VLFY), 96-116 (WDGG…MLWF), 124-144 (FFQV…AGRL), 199-219 (SQLY…NVFI), 226-246 (GSVS…VECF), and 260-280 (ISMG…MMIW). An a 1,2-diacyl-sn-glycero-3-phospho-(1'-sn-glycerol)-binding site is contributed by Arg-143.

The protein belongs to the Lgt family.

Its subcellular location is the cell inner membrane. It catalyses the reaction L-cysteinyl-[prolipoprotein] + a 1,2-diacyl-sn-glycero-3-phospho-(1'-sn-glycerol) = an S-1,2-diacyl-sn-glyceryl-L-cysteinyl-[prolipoprotein] + sn-glycerol 1-phosphate + H(+). Its pathway is protein modification; lipoprotein biosynthesis (diacylglyceryl transfer). Catalyzes the transfer of the diacylglyceryl group from phosphatidylglycerol to the sulfhydryl group of the N-terminal cysteine of a prolipoprotein, the first step in the formation of mature lipoproteins. The sequence is that of Phosphatidylglycerol--prolipoprotein diacylglyceryl transferase from Yersinia pseudotuberculosis serotype O:1b (strain IP 31758).